A 68-amino-acid chain; its full sequence is MLTQIARNRGVPFEILVEKVIEKSAQFAVVIGIIIGQRQAFEDRLLTFNPPEELTALEQEIEQWQFPT.

This is an uncharacterized protein from Haemophilus influenzae (strain ATCC 51907 / DSM 11121 / KW20 / Rd).